The chain runs to 224 residues: Probable 2-phosphosulfolactate phosphatase (224 aa).

It belongs to the ComB family. The cofactor is Mg(2+).

It catalyses the reaction (2R)-O-phospho-3-sulfolactate + H2O = (2R)-3-sulfolactate + phosphate. This Pseudothermotoga lettingae (strain ATCC BAA-301 / DSM 14385 / NBRC 107922 / TMO) (Thermotoga lettingae) protein is Probable 2-phosphosulfolactate phosphatase.